Consider the following 62-residue polypeptide: Sperm protamine P1 (62 aa).

Positions 1-62 (MARYRRHSRS…RRYSRRRRRY (62 aa)) are disordered.

This sequence belongs to the protamine P1 family. In terms of tissue distribution, testis.

It localises to the nucleus. The protein resides in the chromosome. Functionally, protamines substitute for histones in the chromatin of sperm during the haploid phase of spermatogenesis. They compact sperm DNA into a highly condensed, stable and inactive complex. The sequence is that of Sperm protamine P1 (PRM1) from Sminthopsis longicaudata (Long-tailed dunnart).